A 150-amino-acid polypeptide reads, in one-letter code: Siroheme decarboxylase NirD subunit (150 aa).

This sequence belongs to the Ahb/Nir family. As to quaternary structure, probably forms a complex composed of NirD, NirL, NirG and NirH. All proteins are required for the total conversion of siroheme to didecarboxysiroheme.

The catalysed reaction is siroheme + 2 H(+) = 12,18-didecarboxysiroheme + 2 CO2. Its pathway is porphyrin-containing compound metabolism. In terms of biological role, involved in heme d1 biosynthesis. Catalyzes the decarboxylation of siroheme into didecarboxysiroheme. In Pseudomonas aeruginosa (strain ATCC 15692 / DSM 22644 / CIP 104116 / JCM 14847 / LMG 12228 / 1C / PRS 101 / PAO1), this protein is Siroheme decarboxylase NirD subunit.